Consider the following 683-residue polypeptide: Glycine--tRNA ligase beta subunit (683 aa).

Belongs to the class-II aminoacyl-tRNA synthetase family. As to quaternary structure, tetramer of two alpha and two beta subunits.

Its subcellular location is the cytoplasm. The catalysed reaction is tRNA(Gly) + glycine + ATP = glycyl-tRNA(Gly) + AMP + diphosphate. The protein is Glycine--tRNA ligase beta subunit of Pseudomonas putida (strain W619).